A 533-amino-acid polypeptide reads, in one-letter code: Dipeptidase (533 aa).

Residue Cys-3 is part of the active site.

It belongs to the peptidase C69 family.

It catalyses the reaction an L-aminoacyl-L-amino acid + H2O = 2 an L-alpha-amino acid. Its function is as follows. Hydrolyzes a wide range of dipeptides. Highest activity against Ala-Gln. The protein is Dipeptidase of Bifidobacterium longum (strain NCC 2705).